We begin with the raw amino-acid sequence, 251 residues long: DNA repair protein RecO (251 aa).

It belongs to the RecO family.

Its function is as follows. Involved in DNA repair and RecF pathway recombination. The sequence is that of DNA repair protein RecO from Macrococcus caseolyticus (strain JCSC5402) (Macrococcoides caseolyticum).